The primary structure comprises 666 residues: Endogenous retrovirus group K member 10 Gag polyprotein (666 aa).

Gly2 is lipidated: N-myristoyl glycine. The tract at residues 164 to 183 (EGKGPELMGPSESKPRGTSP) is disordered. 2 consecutive CCHC-type zinc fingers follow at residues 544–561 (GKCYNCGQIGHLKKNCPV) and 580–597 (DLCPRCKKGKHWASQCRS). Residues 598–642 (KFDKNGQPLSGNEQRGQPQAPQQTGAFPIQPFVPQGFQGQQPPLS) are disordered. The span at 604-622 (QPLSGNEQRGQPQAPQQTG) shows a compositional bias: polar residues. Residues 624 to 640 (FPIQPFVPQGFQGQQPP) show a composition bias toward low complexity.

It belongs to the beta type-B retroviral Gag protein family. HERV class-II K(HML-2) gag subfamily. Myristoylation is essential for retroviral assembly. Alteration of the glycine residue leads to a block in the budding of particles and an accumulation of Gag inside the cell. Post-translationally, specific enzymatic cleavages may yield mature proteins.

It is found in the cell membrane. Functionally, the products of the Gag polyproteins of infectious retroviruses perform highly complex orchestrated tasks during the assembly, budding, maturation, and infection stages of the viral replication cycle. During viral assembly, the proteins form membrane associations and self-associations that ultimately result in budding of an immature virion from the infected cell. Gag precursors also function during viral assembly to selectively bind and package two plus strands of genomic RNA. Endogenous Gag proteins may have kept, lost or modified their original function during evolution. This Homo sapiens (Human) protein is Endogenous retrovirus group K member 10 Gag polyprotein (ERVK-10).